Here is a 173-residue protein sequence, read N- to C-terminus: Shikimate kinase (173 aa).

An ATP-binding site is contributed by 14–19 (GAGKST). Residue serine 18 participates in Mg(2+) binding. Substrate is bound by residues aspartate 36, arginine 60, and glycine 82. Position 120 (arginine 120) interacts with ATP. Arginine 140 contributes to the substrate binding site. Glutamine 157 provides a ligand contact to ATP.

It belongs to the shikimate kinase family. Monomer. It depends on Mg(2+) as a cofactor.

It localises to the cytoplasm. It carries out the reaction shikimate + ATP = 3-phosphoshikimate + ADP + H(+). It functions in the pathway metabolic intermediate biosynthesis; chorismate biosynthesis; chorismate from D-erythrose 4-phosphate and phosphoenolpyruvate: step 5/7. Catalyzes the specific phosphorylation of the 3-hydroxyl group of shikimic acid using ATP as a cosubstrate. The chain is Shikimate kinase from Baumannia cicadellinicola subsp. Homalodisca coagulata.